The following is a 204-amino-acid chain: Large ribosomal subunit protein uL4 (204 aa).

Residues 42–52 (GTKAQKSRSQV) show a composition bias toward polar residues. The disordered stretch occupies residues 42–70 (GTKAQKSRSQVSGTTKKSKKQKGGGARHG).

This sequence belongs to the universal ribosomal protein uL4 family. In terms of assembly, part of the 50S ribosomal subunit.

One of the primary rRNA binding proteins, this protein initially binds near the 5'-end of the 23S rRNA. It is important during the early stages of 50S assembly. It makes multiple contacts with different domains of the 23S rRNA in the assembled 50S subunit and ribosome. Functionally, forms part of the polypeptide exit tunnel. The sequence is that of Large ribosomal subunit protein uL4 from Xylella fastidiosa (strain M12).